A 60-amino-acid chain; its full sequence is Large ribosomal subunit protein bL32 (60 aa).

Residues 1–19 are compositionally biased toward basic residues; it reads MAVPKRRTSKRRKRARNTH. Residues 1–20 are disordered; sequence MAVPKRRTSKRRKRARNTHK.

This sequence belongs to the bacterial ribosomal protein bL32 family.

In Gemmatimonas aurantiaca (strain DSM 14586 / JCM 11422 / NBRC 100505 / T-27), this protein is Large ribosomal subunit protein bL32.